The following is a 242-amino-acid chain: Methylthioribulose-1-phosphate dehydratase (242 aa).

Ser-87 is modified (phosphoserine). Cys-97 is a substrate binding site. Zn(2+) contacts are provided by His-115 and His-117. Glu-139 functions as the Proton donor/acceptor in the catalytic mechanism. His-195 contacts Zn(2+).

It belongs to the aldolase class II family. MtnB subfamily. Homotetramer. Interacts with APAF1. May interact with CASP1. It depends on Zn(2+) as a cofactor. As to expression, isoform 1 is ubiquitously expressed. Isoform 2 is expressed at lower levels and detected in heart, brain, pancreas, liver, placenta, skeletal muscle and kidney.

It localises to the cytoplasm. It carries out the reaction 5-(methylsulfanyl)-D-ribulose 1-phosphate = 5-methylsulfanyl-2,3-dioxopentyl phosphate + H2O. The protein operates within amino-acid biosynthesis; L-methionine biosynthesis via salvage pathway; L-methionine from S-methyl-5-thio-alpha-D-ribose 1-phosphate: step 2/6. Catalyzes the dehydration of methylthioribulose-1-phosphate (MTRu-1-P) into 2,3-diketo-5-methylthiopentyl-1-phosphate (DK-MTP-1-P). Functions in the methionine salvage pathway, which plays a key role in cancer, apoptosis, microbial proliferation and inflammation. May inhibit the CASP1-related inflammatory response (pyroptosis), the CASP9-dependent apoptotic pathway and the cytochrome c-dependent and APAF1-mediated cell death. The polypeptide is Methylthioribulose-1-phosphate dehydratase (Homo sapiens (Human)).